Here is a 700-residue protein sequence, read N- to C-terminus: MGINVSRTADLGSNEWLQRFVGRHHIAHDDEAFWNGLLNYNIVLPENSQDQLNLDSRLETLCQSFIGNNLKTGNFGSLVTVFLEKTSELLSLSDQESNMHVWQTFNALFIIRTLVKYINETGSEFQLLQHFEALPSAELVQAAVELQQQTPAESATIAIEATEQAAAAAASAPVFVDGAKFETFIDALVNLIVVIPVKEFTYHLHLEAVNMLITLLSVHLFAQQPTEKSIVFRTVFKCQHANVLMSALLHFVARMVEVPHTMFGSSSAGSIVFGIAESLLSIFTFRKQQDVLKASNAVGGELSLQFRTHYPLANQSLLLILILTNHCTAQENAYRASLFGCADSKDSPKQGTVSFQIDFSAVYETLCRIVTIDQATLLLYLLLHRNERFYRFVMQQQDLEQLVIPILQTLYNAPDSNSHHIYMSLIVLLILSEDEGFNKNVHTIMLKNITWYTERSISEISLGGILILIVIRTIQYNMLKMRDKYLHTNCLAALANMSGHFRALHPYVAQRLVSLFETLARKHTRLDAQLKEPADSAVFVNVVTTAEDMLQDLSVLEEVLRMVLEILNSCLTNQLVYCPNLVYTLLYKRSVFEGFRSHHAFQDVVQNIDMVVGFFSSRLQRVQEQRGELGVNEVLEVISKGASQWSSDRLRKFPDLKFKYVEEDAPEEFFIPYVWTLVCKYGCVHFSSESIKTVTTDIAC.

Residue Gly-2 is the site of N-myristoyl glycine attachment. Ser-347 carries the phosphoserine modification.

Belongs to the dymeclin family.

In Drosophila pseudoobscura pseudoobscura (Fruit fly), this protein is Dymeclin.